A 331-amino-acid polypeptide reads, in one-letter code: Fructose-1,6-bisphosphatase class 1 (331 aa).

Mg(2+) contacts are provided by glutamate 88, aspartate 108, leucine 110, and aspartate 111. Residues 111–114 (DGSS) and asparagine 201 contribute to the substrate site. Mg(2+) is bound at residue glutamate 273.

This sequence belongs to the FBPase class 1 family. In terms of assembly, homotetramer. Mg(2+) is required as a cofactor.

The protein localises to the cytoplasm. The catalysed reaction is beta-D-fructose 1,6-bisphosphate + H2O = beta-D-fructose 6-phosphate + phosphate. It functions in the pathway carbohydrate biosynthesis; gluconeogenesis. The chain is Fructose-1,6-bisphosphatase class 1 from Methylobacillus flagellatus (strain ATCC 51484 / DSM 6875 / VKM B-1610 / KT).